The primary structure comprises 481 residues: Cysteine--tRNA ligase (481 aa).

Residue Cys29 participates in Zn(2+) binding. The short motif at 31–41 (PTTYDYIHLGN) is the 'HIGH' region element. Residues Cys209, His234, and Glu238 each contribute to the Zn(2+) site. The short motif at 267-271 (KMSKS) is the 'KMSKS' region element. An ATP-binding site is contributed by Lys270.

Belongs to the class-I aminoacyl-tRNA synthetase family. As to quaternary structure, monomer. Zn(2+) serves as cofactor.

The protein localises to the cytoplasm. The enzyme catalyses tRNA(Cys) + L-cysteine + ATP = L-cysteinyl-tRNA(Cys) + AMP + diphosphate. This Heliobacterium modesticaldum (strain ATCC 51547 / Ice1) protein is Cysteine--tRNA ligase.